The sequence spans 258 residues: UPF0246 protein ABO_1338 (258 aa).

This sequence belongs to the UPF0246 family.

The sequence is that of UPF0246 protein ABO_1338 from Alcanivorax borkumensis (strain ATCC 700651 / DSM 11573 / NCIMB 13689 / SK2).